A 99-amino-acid chain; its full sequence is Transcription and mRNA export factor SUS1 (99 aa).

This sequence belongs to the ENY2 family. In terms of assembly, component of the nuclear pore complex (NPC)-associated TREX-2 complex (transcription and export complex 2), composed of at least SUS1, SAC3, THP1, SEM1, and CDC31. TREX-2 contains 2 SUS1 chains. The TREX-2 complex interacts with the nucleoporin NUP1. Component of the 1.8 MDa SAGA transcription coactivator-HAT complex. SAGA is built of 5 distinct domains with specialized functions. Within the SAGA complex, SUS1, SGF11, SGF73 and UBP8 form an additional subcomplex of SAGA called the DUB module (deubiquitination module). Interacts directly with THP1, SAC3, SGF11, and with the RNA polymerase II.

Its subcellular location is the nucleus. It is found in the nucleoplasm. The protein localises to the cytoplasm. It localises to the P-body. Involved in mRNA export coupled transcription activation by association with both the TREX-2 and the SAGA complexes. At the promoters, SAGA is required for recruitment of the basal transcription machinery. It influences RNA polymerase II transcriptional activity through different activities such as TBP interaction and promoter selectivity, interaction with transcription activators, and chromatin modification through histone acetylation and deubiquitination. Within the SAGA complex, participates in a subcomplex required for deubiquitination of H2B and for the maintenance of steady-state H3 methylation levels. The TREX-2 complex functions in docking export-competent ribonucleoprotein particles (mRNPs) to the nuclear entrance of the nuclear pore complex (nuclear basket). TREX-2 participates in mRNA export and accurate chromatin positioning in the nucleus by tethering genes to the nuclear periphery. May also be involved in cytoplasmic mRNA decay by interaction with components of P-bodies. This is Transcription and mRNA export factor SUS1 from Eremothecium gossypii (strain ATCC 10895 / CBS 109.51 / FGSC 9923 / NRRL Y-1056) (Yeast).